The primary structure comprises 610 residues: GATOR complex protein NPRL3 (610 aa).

Serine 437 bears the Phosphoserine mark. A disordered region spans residues 474–501 (REASEDHSSLASDNIAVQPSSSHKSNFS). Over residues 482-501 (SLASDNIAVQPSSSHKSNFS) the composition is skewed to polar residues.

The protein belongs to the NPR3 family. In terms of assembly, component of the GATOR complex consisting of mio, Nup44A/Seh1, Im11, Nplr3, Nplr2, Wdr24, Wdr59 and Sec13. Within the GATOR complex, probable component of the GATOR1 subcomplex which is likely composed of Iml1, Nplr2 and Nplr3. Interacts with Nprl2.

It localises to the cytoplasm. It is found in the lysosome. Its function is as follows. An essential component of the GATOR subcomplex GATOR1 which functions as an inhibitor of the amino acid-sensing branch of the TORC1 signaling pathway. The two GATOR subcomplexes, GATOR1 and GATOR2, regulate the TORC1 pathway in order to mediate metabolic homeostasis, female gametogenesis and the response to amino acid limitation and complete starvation. The function of GATOR1 in negatively regulating the TORC1 pathway is essential for maintaining baseline levels of TORC1 activity under nutrient rich conditions, and for promoting survival during amino acid or complete starvation by inhibiting TORC1-dependent cell growth and promoting catabolic metabolism and autophagy. In addition, this inhibition of TORC1 is necessary to maintain female fertility under normal conditions and during periods of nutrient stress. GATOR1 and GATOR2 act at different stages of oogenesis to regulate TORC1 in order to control meiotic entry and promote oocyte growth and development. After exactly four mitotic cyst divisions, the GATOR1 complex members (Iml1, Nprl2 and Nprl3) down-regulate TORC1 to slow cellular metabolism and promote the mitotic/meiotic transition. At later stages of oogenesis, the mio and Nup44A components of the GATOR2 complex inhibit GATOR1 and thus activate TORC1 to promote meiotic progression, and drive oocyte growth and development. This Drosophila melanogaster (Fruit fly) protein is GATOR complex protein NPRL3.